Consider the following 326-residue polypeptide: Ras association domain-containing protein 2 (326 aa).

Residues 176-264 (YNHKTSVFTP…SKVFLMEKDQ (89 aa)) enclose the Ras-associating domain. The SARAH domain maps to 272-319 (VAQYIKFEMPVLKSFIQKLQEEEDREVEKLMRKYTVLRLMIRQRLEEI).

As to quaternary structure, interacts directly with activated KRAS in a GTP-dependent manner. Interacts (via SARAH domain) with STK3/MST2 and STK4/MST1. In terms of processing, phosphorylated by STK3/MST2 and STK4/MST1.

The protein localises to the nucleus. Its subcellular location is the cytoplasm. It localises to the chromosome. It is found in the centromere. The protein resides in the kinetochore. Potential tumor suppressor. Acts as a KRAS-specific effector protein. May promote apoptosis and cell cycle arrest. Stabilizes STK3/MST2 by protecting it from proteasomal degradation. This is Ras association domain-containing protein 2 (Rassf2) from Mus musculus (Mouse).